The sequence spans 362 residues: 3-isopropylmalate dehydrogenase (362 aa).

Position 76-87 (76-87 (GPKWGTGSVRPE)) interacts with NAD(+). Substrate is bound by residues Arg94, Arg104, Arg133, and Asp222. The Mg(2+) site is built by Asp222, Asp247, and Asp251. Position 286 to 297 (286 to 297 (GSAPDLGPGKVN)) interacts with NAD(+).

This sequence belongs to the isocitrate and isopropylmalate dehydrogenases family. Homodimer. Mg(2+) is required as a cofactor. It depends on Mn(2+) as a cofactor.

It is found in the cytoplasm. It catalyses the reaction (2R,3S)-3-isopropylmalate + NAD(+) = 4-methyl-2-oxopentanoate + CO2 + NADH. The protein operates within amino-acid biosynthesis; L-leucine biosynthesis; L-leucine from 3-methyl-2-oxobutanoate: step 3/4. In terms of biological role, catalyzes the oxidation of 3-carboxy-2-hydroxy-4-methylpentanoate (3-isopropylmalate) to 3-carboxy-4-methyl-2-oxopentanoate. The product decarboxylates to 4-methyl-2 oxopentanoate. This Pichia angusta (Yeast) protein is 3-isopropylmalate dehydrogenase (LEU2).